The primary structure comprises 242 residues: Probable transcriptional regulatory protein MHP7448_0474 (242 aa).

The protein belongs to the TACO1 family.

It localises to the cytoplasm. The protein is Probable transcriptional regulatory protein MHP7448_0474 of Mesomycoplasma hyopneumoniae (strain 7448) (Mycoplasma hyopneumoniae).